The following is a 238-amino-acid chain: MGRSFEVRKASMAKTAGAKIKVYSKYGKEIYVLAKNGSSDPDMNLPLKHLIAKAKKDQVPAHVIDKAIDKANGGGGEDFQPARYEGFGPGGTSVIVDCLTDNGNRTFQDVRQCFVKTGAKIGVEGTVSHMFAHQAVFQFAGEDDEIILETLMMEDVDVTDVELEDGVITVFAPTTEFFKTKTALNAAFPDLTLDVEEITFVPQTTTPIAEEDSEKFQKFLDMLDDCDDVQQVYHNAEL.

The protein belongs to the TACO1 family.

Its subcellular location is the cytoplasm. The chain is Probable transcriptional regulatory protein VS_II1504 from Vibrio atlanticus (strain LGP32) (Vibrio splendidus (strain Mel32)).